The following is a 64-amino-acid chain: Putative calcium channel toxin Tx758 (64 aa).

A signal peptide spans Met1–Ala18. Residues Glu19–Arg27 constitute a propeptide that is removed on maturation. 3 disulfide bridges follow: Cys29–Cys43, Cys36–Cys49, and Cys42–Cys58.

Belongs to the scorpion calcin-like family. As to expression, expressed by the venom gland.

Its subcellular location is the secreted. May increase intracellular calcium release through the activation of nuclear inositol 1,4,5-trisphosphate receptors (ITPR) of cardiomyocytes, thereby causing an increase in the contraction frequency of these cells. In Buthus israelis (Israeli scorpion), this protein is Putative calcium channel toxin Tx758.